A 535-amino-acid polypeptide reads, in one-letter code: CTP synthase (535 aa).

The tract at residues 1–268 (MSTKYIFVTG…DQIVCDHLKL (268 aa)) is amidoligase domain. CTP is bound at residue Ser-14. Ser-14 provides a ligand contact to UTP. Residue 15 to 20 (SIGKGI) coordinates ATP. An L-glutamine-binding site is contributed by Tyr-55. Asp-72 contributes to the ATP binding site. Asp-72 and Glu-142 together coordinate Mg(2+). CTP is bound by residues 149-151 (DIE), 189-194 (KTKPTQ), and Lys-225. UTP-binding positions include 189 to 194 (KTKPTQ) and Lys-225. The Glutamine amidotransferase type-1 domain maps to 293–535 (KISLVGKYVE…FVTAAVENSN (243 aa)). L-glutamine is bound at residue Gly-355. Cys-382 (nucleophile; for glutamine hydrolysis) is an active-site residue. L-glutamine is bound by residues 383–386 (LGMQ), Glu-406, and Arg-464. Residues His-509 and Glu-511 contribute to the active site.

This sequence belongs to the CTP synthase family. In terms of assembly, homotetramer.

The catalysed reaction is UTP + L-glutamine + ATP + H2O = CTP + L-glutamate + ADP + phosphate + 2 H(+). It catalyses the reaction L-glutamine + H2O = L-glutamate + NH4(+). It carries out the reaction UTP + NH4(+) + ATP = CTP + ADP + phosphate + 2 H(+). It participates in pyrimidine metabolism; CTP biosynthesis via de novo pathway; CTP from UDP: step 2/2. Allosterically activated by GTP, when glutamine is the substrate; GTP has no effect on the reaction when ammonia is the substrate. The allosteric effector GTP functions by stabilizing the protein conformation that binds the tetrahedral intermediate(s) formed during glutamine hydrolysis. Inhibited by the product CTP, via allosteric rather than competitive inhibition. Its function is as follows. Catalyzes the ATP-dependent amination of UTP to CTP with either L-glutamine or ammonia as the source of nitrogen. Regulates intracellular CTP levels through interactions with the four ribonucleotide triphosphates. This is CTP synthase from Streptococcus pneumoniae (strain ATCC BAA-255 / R6).